The primary structure comprises 679 residues: UvrABC system protein B (679 aa).

Residues 25–176 (EGVNGGERYQ…NLRGSLRDLV (152 aa)) enclose the Helicase ATP-binding domain. Residue 38–45 (GATGTGKT) participates in ATP binding. The Beta-hairpin signature appears at 91–114 (YYDYYQPEAYVPVSDTYIAKTASI). A Helicase C-terminal domain is found at 429-591 (QVDDLLGEIR…ITPTAAGKKA (163 aa)). One can recognise a UVR domain in the interval 638–673 (PELIDQLELKMKESAKKLDFEEAANLRDRIKKLRQK).

It belongs to the UvrB family. In terms of assembly, forms a heterotetramer with UvrA during the search for lesions. Interacts with UvrC in an incision complex.

The protein resides in the cytoplasm. In terms of biological role, the UvrABC repair system catalyzes the recognition and processing of DNA lesions. A damage recognition complex composed of 2 UvrA and 2 UvrB subunits scans DNA for abnormalities. Upon binding of the UvrA(2)B(2) complex to a putative damaged site, the DNA wraps around one UvrB monomer. DNA wrap is dependent on ATP binding by UvrB and probably causes local melting of the DNA helix, facilitating insertion of UvrB beta-hairpin between the DNA strands. Then UvrB probes one DNA strand for the presence of a lesion. If a lesion is found the UvrA subunits dissociate and the UvrB-DNA preincision complex is formed. This complex is subsequently bound by UvrC and the second UvrB is released. If no lesion is found, the DNA wraps around the other UvrB subunit that will check the other stand for damage. The sequence is that of UvrABC system protein B from Synechococcus sp. (strain CC9311).